We begin with the raw amino-acid sequence, 83 residues long: Sec-independent protein translocase protein TatA (83 aa).

Residues 1-21 (MGSFSIWHWLIVLLIVVMVFG) form a helical membrane-spanning segment. A disordered region spans residues 44 to 83 (KDGGQSAAATDDKPAAPAGQVTNAQASDKTTIDVEARQKS). Over residues 63 to 72 (QVTNAQASDK) the composition is skewed to polar residues. Positions 73-83 (TTIDVEARQKS) are enriched in basic and acidic residues.

The protein belongs to the TatA/E family. In terms of assembly, the Tat system comprises two distinct complexes: a TatABC complex, containing multiple copies of TatA, TatB and TatC subunits, and a separate TatA complex, containing only TatA subunits. Substrates initially bind to the TatABC complex, which probably triggers association of the separate TatA complex to form the active translocon.

Its subcellular location is the cell inner membrane. Functionally, part of the twin-arginine translocation (Tat) system that transports large folded proteins containing a characteristic twin-arginine motif in their signal peptide across membranes. TatA could form the protein-conducting channel of the Tat system. The protein is Sec-independent protein translocase protein TatA of Polaromonas sp. (strain JS666 / ATCC BAA-500).